Here is a 304-residue protein sequence, read N- to C-terminus: tRNA-uridine aminocarboxypropyltransferase 1 (304 aa).

At S2 the chain carries N-acetylserine. Positions 206-209 (DSTW) match the DXTW motif.

Belongs to the TDD superfamily. DTWD1 family.

It is found in the nucleus. It catalyses the reaction a uridine in tRNA + S-adenosyl-L-methionine = a 3-[(3S)-3-amino-3-carboxypropyl]uridine in tRNA + S-methyl-5'-thioadenosine + H(+). Its function is as follows. Catalyzes the formation of 3-(3-amino-3-carboxypropyl)uridine (acp3U) at position 20 in the D-loop of several cytoplasmic tRNAs (acp3U(20)). The chain is tRNA-uridine aminocarboxypropyltransferase 1 from Pongo abelii (Sumatran orangutan).